The chain runs to 329 residues: Short-chain dehydrogenase/reductase prx4 (329 aa).

NADP(+) contacts are provided by Ser58, Ile60, and Asn81. N-linked (GlcNAc...) asparagine glycosylation is present at Asn91. NADP(+) is bound by residues Asp98, Asn121, Lys161, Tyr194, Lys198, and Thr229. Tyr194 functions as the Proton acceptor in the catalytic mechanism. Lys198 acts as the Lowers pKa of active site Tyr in catalysis. The chain crosses the membrane as a helical span at residues 238-258; that stretch reads GPLMAAGLPVSSAHMVGLAVV.

The protein belongs to the short-chain dehydrogenases/reductases (SDR) family.

The protein resides in the membrane. The protein operates within sesquiterpene biosynthesis. In terms of biological role, short-chain dehydrogenase/reductase; part of the gene cluster that mediates the biosynthesis of PR-toxin, a bicyclic sesquiterpene belonging to the eremophilane class and acting as a mycotoxin. The first step of the pathway is catalyzed by the aristolochene synthase which performs the cyclization of trans,trans-farnesyl diphosphate (FPP) to the bicyclic sesquiterpene aristolochene. Following the formation of aristolochene, the non-oxygenated aristolochene is converted to the trioxygenated intermediate eremofortin B, via 7-epi-neopetasone. This conversion appears to involve three enzymes, a hydroxysterol oxidase-like enzyme, the quinone-oxidase prx3 that forms the quinone-type-structure in the bicyclic nucleus of aristolochene with the C8-oxo group and the C-3 hydroxyl group, and the P450 monooxygenase ORF6 that introduces the epoxide at the double bond between carbons 1 and 2. No monoxy or dioxy-intermediates have been reported to be released to the broth, so these three early oxidative reactions may be coupled together. Eremofortin B is further oxidized by another P450 monooxygenase, that introduces a second epoxide between carbons 7 and 11 prior to acetylation to eremofortin A by the acetyltransferase ORF8. The second epoxidation may be performed by a second P450 monooxygenase. After the acetylation step, eremofortin A is converted to eremofortin C and then to PR-toxin. First the conversion of eremofortin A to eremofortin C proceeds by oxidation of the side chain of the molecule at C-12 and is catalyzed by the short-chain oxidoreductase prx1. The cytochrome P450 monooxygenase ORF6 is probably also involved in this step. The primary alcohol formed at C-12 is finally oxidized by the short-chain alcohol dehydrogenase prx4 that forms PR-toxin. The chain is Short-chain dehydrogenase/reductase prx4 from Penicillium roqueforti.